Reading from the N-terminus, the 159-residue chain is MTLEEVRGQDTVPESTARMQGAGKALHELLLSAQRQGCLTAGVYESAKVLNVDPDNVTFCVLAAGEEDEGDIALQIHFTLIQAFCCENDIDIVRVGDVQRLAAIVGAGEEAGAPGDLHCILISNPNEDAWKDPALEKLSLFCEESRSVNDWVPSITLPE.

Residues 43–86 (VYESAKVLNVDPDNVTFCVLAAGEEDEGDIALQIHFTLIQAFCC) are homodimerization.

The protein belongs to the GADD45 family. In terms of assembly, undergoes concentration-dependent homodimerization, which is required for growth inhibititory activity and enhances interaction with PCNA. Interacts with GADD45GIP1. Interacts with PCNA.

Functionally, involved in the regulation of growth and apoptosis. Mediates activation of stress-responsive MTK1/MEKK4 MAPKKK. The sequence is that of Growth arrest and DNA damage-inducible protein GADD45 gamma (GADD45G) from Homo sapiens (Human).